Reading from the N-terminus, the 727-residue chain is Glucans biosynthesis glucosyltransferase H (727 aa).

Residues 17-41 (GSAMPNERPGPMEPQSLSQMPEGFP) form a disordered region. Helical transmembrane passes span 58 to 80 (FFVV…AVFS), 95 to 117 (FAIN…LLLL), 407 to 429 (GIMA…MLAL), 457 to 479 (ALRL…VLLL), 499 to 521 (VLFE…CGAV), and 572 to 594 (LLAW…AWTG).

Belongs to the glycosyltransferase 2 family. OpgH subfamily.

It is found in the cell inner membrane. It participates in glycan metabolism; osmoregulated periplasmic glucan (OPG) biosynthesis. Functionally, involved in the biosynthesis of osmoregulated periplasmic glucans (OPGs). This Shewanella oneidensis (strain ATCC 700550 / JCM 31522 / CIP 106686 / LMG 19005 / NCIMB 14063 / MR-1) protein is Glucans biosynthesis glucosyltransferase H.